We begin with the raw amino-acid sequence, 337 residues long: S-adenosylmethionine:tRNA ribosyltransferase-isomerase (337 aa).

The protein belongs to the QueA family. Monomer.

The protein localises to the cytoplasm. It catalyses the reaction 7-aminomethyl-7-carbaguanosine(34) in tRNA + S-adenosyl-L-methionine = epoxyqueuosine(34) in tRNA + adenine + L-methionine + 2 H(+). Its pathway is tRNA modification; tRNA-queuosine biosynthesis. Functionally, transfers and isomerizes the ribose moiety from AdoMet to the 7-aminomethyl group of 7-deazaguanine (preQ1-tRNA) to give epoxyqueuosine (oQ-tRNA). The polypeptide is S-adenosylmethionine:tRNA ribosyltransferase-isomerase (Legionella pneumophila (strain Corby)).